The sequence spans 373 residues: Alcohol dehydrogenase class-3 (373 aa).

At Ala-1 the chain carries N-acetylalanine. 7 residues coordinate Zn(2+): Cys-44, His-66, Cys-96, Cys-99, Cys-102, Cys-110, and Cys-173.

It belongs to the zinc-containing alcohol dehydrogenase family. Class-III subfamily. Homodimer. The cofactor is Zn(2+).

The protein localises to the cytoplasm. It catalyses the reaction a primary alcohol + NAD(+) = an aldehyde + NADH + H(+). The enzyme catalyses a secondary alcohol + NAD(+) = a ketone + NADH + H(+). It carries out the reaction S-(hydroxymethyl)glutathione + NADP(+) = S-formylglutathione + NADPH + H(+). The catalysed reaction is S-(hydroxymethyl)glutathione + NAD(+) = S-formylglutathione + NADH + H(+). It catalyses the reaction S-nitrosoglutathione + NADH + H(+) = S-(hydroxysulfenamide)glutathione + NAD(+). Class-III ADH is remarkably ineffective in oxidizing ethanol, but it readily catalyzes the oxidation of long-chain primary alcohols and the oxidation of S-(hydroxymethyl) glutathione. Also acts as a S-nitroso-glutathione reductase by catalyzing the NADH-dependent reduction of S-nitrosoglutathione, thereby regulating protein S-nitrosylation. This Saara hardwickii (Indian spiny-tailed lizard) protein is Alcohol dehydrogenase class-3.